The sequence spans 297 residues: Ezy-1 protein (297 aa).

Disordered regions lie at residues 1-34 (MAAV…GDGG), 115-151 (FTGK…SSSS), and 255-297 (QPAG…SPNM). Residues 123 to 135 (AEGDDGEDEEEGE) show a composition bias toward acidic residues. A compositionally biased stretch (low complexity) spans 136–150 (AQGVGKDAVDSSSSS). Positions 259–269 (DGHEPEPKRPE) are enriched in basic and acidic residues.

The sequence is that of Ezy-1 protein (Ezy-1) from Chlamydomonas reinhardtii (Chlamydomonas smithii).